Here is a 141-residue protein sequence, read N- to C-terminus: Large ribosomal subunit protein bL17 (141 aa).

The protein belongs to the bacterial ribosomal protein bL17 family. Part of the 50S ribosomal subunit. Contacts protein L32.

The chain is Large ribosomal subunit protein bL17 from Agrobacterium fabrum (strain C58 / ATCC 33970) (Agrobacterium tumefaciens (strain C58)).